Reading from the N-terminus, the 310-residue chain is Putative carbonic anhydrase 5 (310 aa).

The signal sequence occupies residues 1–20; sequence MPSHLLVLSLLVALLVVVSC. Residues 26-280 form the Alpha-carbonic anhydrase domain; the sequence is HGWGYDENNG…LNGRRIQYRP (255 aa). His-117, His-119, and His-142 together coordinate Zn(2+). A substrate-binding site is contributed by 223–224; it reads TT.

The protein belongs to the alpha-carbonic anhydrase family.

The protein resides in the secreted. It carries out the reaction hydrogencarbonate + H(+) = CO2 + H2O. In terms of biological role, reversible hydration of carbon dioxide. This chain is Putative carbonic anhydrase 5 (cah-5), found in Caenorhabditis elegans.